Consider the following 153-residue polypeptide: Endoribonuclease YbeY (153 aa).

Zn(2+)-binding residues include His-118, His-122, and His-128.

The protein belongs to the endoribonuclease YbeY family. Zn(2+) serves as cofactor.

It localises to the cytoplasm. In terms of biological role, single strand-specific metallo-endoribonuclease involved in late-stage 70S ribosome quality control and in maturation of the 3' terminus of the 16S rRNA. This Clostridioides difficile (strain 630) (Peptoclostridium difficile) protein is Endoribonuclease YbeY.